The primary structure comprises 60 residues: Insect toxin mu-NPTX-Nc1a (60 aa).

Positions 1–19 (MIYQVVLLLLVSPAPVSAA) are cleaved as a signal peptide.

Contains 4 disulfide bonds. In terms of tissue distribution, expressed by the venom gland.

The protein localises to the secreted. Its function is as follows. Insect-specific toxin. Blocks voltage-gated potassium and sodium channels. The polypeptide is Insect toxin mu-NPTX-Nc1a (Trichonephila clavata (Joro spider)).